A 342-amino-acid chain; its full sequence is Inositol 2-dehydrogenase 2 (342 aa).

It belongs to the Gfo/Idh/MocA family. Homotetramer.

The catalysed reaction is myo-inositol + NAD(+) = scyllo-inosose + NADH + H(+). In terms of biological role, involved in the oxidation of myo-inositol (MI) to 2-keto-myo-inositol (2KMI or 2-inosose). This Mycolicibacterium vanbaalenii (strain DSM 7251 / JCM 13017 / BCRC 16820 / KCTC 9966 / NRRL B-24157 / PYR-1) (Mycobacterium vanbaalenii) protein is Inositol 2-dehydrogenase 2.